Here is a 525-residue protein sequence, read N- to C-terminus: GMP synthase [glutamine-hydrolyzing] (525 aa).

One can recognise a Glutamine amidotransferase type-1 domain in the interval 8–207; that stretch reads KILILDFGSQ…ALEICGCPAN (200 aa). Residue C85 is the Nucleophile of the active site. Catalysis depends on residues H181 and E183. Residues 208-400 enclose the GMPS ATP-PPase domain; sequence WKPSSIIEDA…LGLPYDMLYR (193 aa). 235–241 provides a ligand contact to ATP; that stretch reads SGGVDSS.

Homodimer.

The enzyme catalyses XMP + L-glutamine + ATP + H2O = GMP + L-glutamate + AMP + diphosphate + 2 H(+). It participates in purine metabolism; GMP biosynthesis; GMP from XMP (L-Gln route): step 1/1. Its function is as follows. Catalyzes the synthesis of GMP from XMP. This is GMP synthase [glutamine-hydrolyzing] from Shewanella pealeana (strain ATCC 700345 / ANG-SQ1).